The following is a 152-amino-acid chain: MDLELFDDDQLLDDKHHDLIKKLVAFCGKQLKLPENTEMSITLVGDDEIERINREYRETDRVTDVISFAIEEGEDDLPLLPGMAKNIGDLFIDPLTVRRHAEDYGHSFERELGYTVVHGFLHLNGYDHIKPEDEAVMIPLQKKILAAYGLTR.

Residues His-118, His-122, and His-128 each contribute to the Zn(2+) site.

This sequence belongs to the endoribonuclease YbeY family. Zn(2+) is required as a cofactor.

It localises to the cytoplasm. Single strand-specific metallo-endoribonuclease involved in late-stage 70S ribosome quality control and in maturation of the 3' terminus of the 16S rRNA. This Lacticaseibacillus paracasei (strain ATCC 334 / BCRC 17002 / CCUG 31169 / CIP 107868 / KCTC 3260 / NRRL B-441) (Lactobacillus paracasei) protein is Endoribonuclease YbeY.